A 235-amino-acid chain; its full sequence is Nitrile hydratase subunit beta (235 aa).

This sequence belongs to the nitrile hydratase subunit beta family. Heterodimer of an alpha and a beta chain.

The enzyme catalyses an aliphatic primary amide = an aliphatic nitrile + H2O. NHase catalyzes the hydration of various nitrile compounds to the corresponding amides. The polypeptide is Nitrile hydratase subunit beta (nthB) (Rhodococcus sp).